The sequence spans 488 residues: uncharacterized protein (488 aa).

Belongs to the protein kinase superfamily. ADCK protein kinase family.

This is an uncharacterized protein from Mycobacterium tuberculosis (strain CDC 1551 / Oshkosh).